Reading from the N-terminus, the 2144-residue chain is HEAT repeat-containing protein 1 (2144 aa).

At methionine 1 the chain carries N-acetylmethionine. Residue threonine 2 is modified to N-acetylthreonine; in HEAT repeat-containing protein 1, N-terminally processed. Serine 516 carries the phosphoserine modification. The HEAT 1 repeat unit spans residues 913–951; it reads ASISSPVVTSLLINLGSPVKEVRRAAIQCLQALSGVASP. A disordered region spans residues 1170–1191; it reads KAKPLGTVQQKRRQKMQQKKSQ. Phosphoserine is present on serine 1190. One copy of the HEAT 2 repeat lies at 1347 to 1385; sequence NKTVKMVIPALIQSDSGDSIEVSRNVEEIVVKIISVFVD. Serine 1492 carries the post-translational modification Phosphoserine. HEAT repeat units lie at residues 1594–1632, 1730–1770, and 2100–2138; these read LLPT…QNIS, IPQL…VVET, and IVLL…VLGE.

It belongs to the HEATR1/UTP10 family. Part of the small subunit (SSU) processome, composed of more than 70 proteins and the RNA chaperone small nucleolar RNA (snoRNA) U3. Interacts with MYC; the interaction is required for localization of MYC to the nucleolus.

It localises to the nucleus. Its subcellular location is the nucleolus. Functionally, ribosome biogenesis factor; required for recruitment of Myc to nucleoli. Involved in nucleolar processing of pre-18S ribosomal RNA. Required for optimal pre-ribosomal RNA transcription by RNA polymerase I. Part of the small subunit (SSU) processome, first precursor of the small eukaryotic ribosomal subunit. During the assembly of the SSU processome in the nucleolus, many ribosome biogenesis factors, an RNA chaperone and ribosomal proteins associate with the nascent pre-rRNA and work in concert to generate RNA folding, modifications, rearrangements and cleavage as well as targeted degradation of pre-ribosomal RNA by the RNA exosome. Involved in neuronal-lineage cell proliferation. The polypeptide is HEAT repeat-containing protein 1 (Homo sapiens (Human)).